The following is a 446-amino-acid chain: Signal recognition particle 54 kDa protein (446 aa).

Residues glycine 104 to threonine 111, aspartate 184 to arginine 188, and threonine 242 to aspartate 245 each bind GTP.

It belongs to the GTP-binding SRP family. SRP54 subfamily. In terms of assembly, part of the signal recognition particle protein translocation system, which is composed of SRP and FtsY. Archaeal SRP consists of a 7S RNA molecule of 300 nucleotides and two protein subunits: SRP54 and SRP19.

The protein localises to the cytoplasm. It carries out the reaction GTP + H2O = GDP + phosphate + H(+). Functionally, involved in targeting and insertion of nascent membrane proteins into the cytoplasmic membrane. Binds to the hydrophobic signal sequence of the ribosome-nascent chain (RNC) as it emerges from the ribosomes. The SRP-RNC complex is then targeted to the cytoplasmic membrane where it interacts with the SRP receptor FtsY. This is Signal recognition particle 54 kDa protein from Methanocorpusculum labreanum (strain ATCC 43576 / DSM 4855 / Z).